The following is a 140-amino-acid chain: Small ribosomal subunit protein uS19 (140 aa).

This sequence belongs to the universal ribosomal protein uS19 family.

In terms of biological role, protein S19 forms a complex with S13 that binds strongly to the 16S ribosomal RNA. In Saccharolobus solfataricus (strain ATCC 35092 / DSM 1617 / JCM 11322 / P2) (Sulfolobus solfataricus), this protein is Small ribosomal subunit protein uS19 (rps19).